The primary structure comprises 294 residues: MNDALKTYLTGIGWFLLSLVSSSANDVISKYLGTRLHSFEVAFFRFFFSSIVLLPFVVYYGKNTLKTSRPFVHILRGLLLFFGMTSWTYGLTIAPVTTATVVSFSIPLFTLILAVFFLNENIIWPRWVVTVVGFIGLVVTLKPHAEDFNPEILYFVLAAISFAMLDIINKKFVIKESMISMLFYSAIVTAIVSLPVASQYWLTPSSFELALLFVLGSSGSLILFFLLKAFSMVDATATAPYRYLELVISVIAAYFIFNEFPDKSTLHGAVIIIPTTLFIIYSEKKAMNRKHESQ.

A run of 10 helical transmembrane segments spans residues 8 to 28 (YLTGIGWFLLSLVSSSANDVI), 41 to 61 (VAFFRFFFSSIVLLPFVVYYG), 74 to 91 (ILRGLLLFFGMTSWTYGL), 98 to 118 (TATVVSFSIPLFTLILAVFFL), 121 to 141 (NIIWPRWVVTVVGFIGLVVTL), 148 to 168 (FNPEILYFVLAAISFAMLDII), 177 to 197 (SMISMLFYSAIVTAIVSLPVA), 207 to 227 (FELALLFVLGSSGSLILFFLL), 237 to 257 (ATAPYRYLELVISVIAAYFIF), and 260 to 280 (FPDKSTLHGAVIIIPTTLFII). 2 EamA domains span residues 21-141 (SSSA…VVTL) and 160-280 (ISFA…LFII).

The protein belongs to the drug/metabolite transporter (DMT) superfamily. 10 TMS drug/metabolite exporter (DME) (TC 2.A.7.3) family.

Its subcellular location is the cell inner membrane. Functionally, transports S-adenosylmethionine. This is S-adenosylmethionine uptake transporter (sam) from Rickettsia conorii (strain ATCC VR-613 / Malish 7).